A 2549-amino-acid chain; its full sequence is Serine/threonine-protein kinase mTOR (2549 aa).

N-acetylmethionine is present on methionine 1. The segment at 1 to 651 is interaction with NBN; that stretch reads MLGTGPATAT…HVVSQTAVQV (651 aa). HEAT repeat units follow at residues 16 to 53, 55 to 99, 100 to 137, 138 to 179, 180 to 220, 222 to 276, 277 to 313, 314 to 364, 365 to 409, 410 to 445, 446 to 494, 495 to 529, 530 to 563, 564 to 596, 597 to 636, 637 to 683, 686 to 724, 727 to 766, 769 to 811, 814 to 853, 857 to 893, 894 to 942, 943 to 988, 989 to 1027, 1029 to 1068, 1069 to 1105, 1106 to 1144, 1145 to 1188, 1189 to 1225, 1226 to 1273, 1274 to 1311, and 1312 to 1345; these read SSNV…MELR, MSQE…VEGG, NSTR…AMAG, DTFT…AISV, PTFF…LILT, QREP…RISS, MEGE…PRHI, TPFT…CCRD, LMEE…AFTD, TQYL…VAVR, SEFK…RAMG, PGIQ…RQIP, QLKK…GLAH, QLAS…EFEG, HSLT…SIHL, ISGH…DERF, HLAQ…MNPA, MPFL…NAPR, RPYM…VSGL, RKWV…STGY, PYRK…LLGA, LDPY…GNLP, LDEF…KCVQ, FLPQ…KSHI, PYMD…GEFK, LYLP…LFGA, NLDD…RLTE, SLDF…GKKY, QIFI…LADE, EEDP…GAAR, RVSK…QAYN, and PMAR…ELAL. Serine 567 is modified (phosphoserine). A Phosphothreonine modification is found at threonine 1162. The residue at position 1218 (lysine 1218) is an N6-acetyllysine. At serine 1261 the chain carries Phosphoserine. TPR repeat units lie at residues 1346-1382, 1383-1408, 1409-1442, 1443-1473, 1474-1507, 1508-1541, 1542-1574, 1575-1614, 1615-1649, 1650-1693, 1694-1731, 1732-1786, 1787-1846, 1898-1930, 1931-1970, and 1971-2005; these read TSQD…GIVL, LGER…QKGP, TPAI…HFGE, LEIQ…NKDD, PELM…VNDE, TQAK…RDTH, DGAF…LDAE, LTAM…RREI, IRQI…PHED, MRTW…PTVH, PQVT…AQHA, IATE…DRSW, YKAW…STEG, NNLQ…VKAI, QIDT…YHPQ, and ALIY…SNTL. Residues 1382–1982 form the FAT domain; the sequence is LLGERAAKCR…IYPLTVASKS (601 aa). Residues lysine 1662, lysine 1702, and arginine 1749 each contribute to the 1D-myo-inositol hexakisphosphate site. Residues 1812–1867 are disordered; the sequence is DEKKKLRHASGANITNATTTATTAASAAAATSTEGSNSESEAESNESSPTPSPLQK. The segment covering 1826–1860 has biased composition (low complexity); the sequence is TNATTTATTAASAAAATSTEGSNSESEAESNESSP. Residues 2012 to 2144 are sufficient for interaction with the FKBP1A/rapamycin complex; it reads VSEELIRVAI…DLELAVPGTY (133 aa). Lysine 2066 is covalently cross-linked (Glycyl lysine isopeptide (Lys-Gly) (interchain with G-Cter in ubiquitin)). Positions 2156-2469 constitute a PI3K/PI4K catalytic domain; sequence IAPSLQVITS…GVELGEPAHK (314 aa). A Phosphoserine modification is found at serine 2159. The interval 2162 to 2168 is G-loop; that stretch reads VITSKQR. Threonine 2164 carries the post-translational modification Phosphothreonine. ATP contacts are provided by serine 2165 and glutamine 2167. A Phosphothreonine; by PKB/AKT1 modification is found at threonine 2173. ATP-binding residues include leucine 2185, lysine 2187, glutamate 2190, tyrosine 2225, glycine 2238, tryptophan 2239, valine 2240, and threonine 2245. The tract at residues 2258–2296 is interaction with MLST8; sequence KILLNIEHRIMLRMAPDYDHLTLMQKVEVFEHAVNNTAG. Residues 2335–2343 are catalytic loop; it reads GLGDRHPSN. Asparagine 2343 contacts Mg(2+). The ATP site is built by methionine 2345 and isoleucine 2356. Positions 2355–2380 are activation loop; the sequence is HIDFGDCFEVAMTREKFPEKIPFRLT. Aspartate 2357 is a Mg(2+) binding site. Threonine 2446 carries the post-translational modification Phosphothreonine; by RPS6KB1. Serine 2448 is subject to Phosphoserine; by RPS6KB1. Serine 2478 carries the post-translational modification Phosphoserine. Position 2481 is a phosphoserine; by autocatalysis (serine 2481). The 33-residue stretch at 2517–2549 folds into the FATC domain; that stretch reads DTLDVPTQVELLIKQATSHENLCQCYIGWCPFW.

The protein belongs to the PI3/PI4-kinase family. As to quaternary structure, part of the mechanistic target of rapamycin complex 1 (mTORC1) which contains MTOR, MLST8 and RPTOR. The mTORC1 complex is a 1 Md obligate dimer of two stoichiometric heterotetramers with overall dimensions of 290 A x 210 A x 135 A. It has a rhomboid shape and a central cavity, the dimeric interfaces are formed by interlocking interactions between the two MTOR and the two RPTOR subunits. The MLST8 subunit forms distal foot-like protuberances, and contacts only one MTOR within the complex, while the small AKT1S1/PRAS40 localizes to the midsection of the central core, in close proximity to RPTOR. mTORC1 associates with AKT1S1/PRAS40, which inhibits its activity by blocking MTOR substrate-recruitment site. Component of the mechanistic target of rapamycin complex 2 (mTORC2), consisting in two heterotretramers composed of MTOR, MLST8, RICTOR and MAPKAP1/SIN1. Interacts with PLPP7 and PML. Interacts with PRR5 and RICTOR; the interaction is direct within the mTORC2 complex and interaction with RICTOR is enhanced by deubiquitination of RICTOR by USP9X. mTORC1 and mTORC2 associate with DEPTOR, which regulates their activity. Interacts with WAC; WAC positively regulates MTOR activity by promoting the assembly of the TTT complex composed of TELO2, TTI1 and TTI2 and the RUVBL complex composed of RUVBL1 and RUVBL2 into the TTT-RUVBL complex which leads to the dimerization of the mTORC1 complex and its subsequent activation. Interacts with UBQLN1. Interacts with TTI1 and TELO2. Interacts with CLIP1; phosphorylates and regulates CLIP1. Interacts with NBN. Interacts with HTR6. Interacts with BRAT1. Interacts with MEAK7 (via C-terminal domain); the interaction increases upon nutrient stimulation. Interacts with TM4SF5; the interaction is positively regulated by arginine and is negatively regulated by leucine. Interacts with GPR137B. Interacts with NCKAP1L. Interacts with TPCN1 and TPCN2; the interaction is required for TPCN1 and TPCN2 sensitivity to ATP. Interacts with ATP6V1A and with CRYAB, forming a ternary complex. Interacts with SLC38A7; this interaction mediates the recruitment of mTORC1 to the lysosome and its subsequent activation. Interacts with TSPAN8. Post-translationally, autophosphorylates when part of mTORC1 or mTORC2. Phosphorylation at Ser-1261, Ser-2159 and Thr-2164 promotes autophosphorylation. Phosphorylated at Ser-2448 by RPS6KB1. Phosphorylation in the kinase domain modulates the interactions of MTOR with RPTOR and AKT1S1/PRAS40 and leads to increased intrinsic mTORC1 kinase activity. Phosphorylation at Ser-2159 by TBK1 in response to growth factors and pathogen recognition receptors promotes mTORC1 activity. Phosphorylation at Ser-2159 by TBK1 in response to EGF growth factor promotes mTORC2 activity, leading to AKT1 phosphorylation and activation. Phosphorylation at Thr-2173 in the ATP-binding region by AKT1 strongly reduces kinase activity. In terms of processing, ubiquitinated at Lys-2066 by the SCF(FBXO22) complex via 'Lys-27'-linked ubiquitination prevents mTORC1 substrate recruitment.

It localises to the lysosome membrane. The protein resides in the endoplasmic reticulum membrane. Its subcellular location is the golgi apparatus membrane. It is found in the cell membrane. The protein localises to the mitochondrion outer membrane. It localises to the cytoplasm. The protein resides in the nucleus. Its subcellular location is the PML body. It is found in the microsome membrane. The protein localises to the cytoplasmic vesicle. It localises to the phagosome. The enzyme catalyses L-seryl-[protein] + ATP = O-phospho-L-seryl-[protein] + ADP + H(+). It catalyses the reaction L-threonyl-[protein] + ATP = O-phospho-L-threonyl-[protein] + ADP + H(+). It carries out the reaction L-tyrosyl-[protein] + ATP = O-phospho-L-tyrosyl-[protein] + ADP + H(+). With respect to regulation, the mTORC1 complex is activated in response to nutrients, growth factors or amino acids: activation requires relocalization of the mTORC1 complex to lysosomes that is mediated by the Ragulator complex, SLC38A9, and the Rag GTPases RagA/RRAGA, RagB/RRAGB, RagC/RRAGC and RagD/RRAGD. Activation of mTORC1 by growth factors such as insulin involves AKT1-mediated phosphorylation of TSC1-TSC2, which leads to the activation of the RHEB GTPase a potent activator of the protein kinase activity of mTORC1. Insulin-stimulated and amino acid-dependent phosphorylation at Ser-1261 promotes autophosphorylation and the activation of mTORC1. On the other hand, low cellular energy levels can inhibit mTORC1 through activation of PRKAA1 while hypoxia inhibits mTORC1 through a REDD1-dependent mechanism which may also require PRKAA1. The kinase activity of MTOR within the mTORC1 complex is positively regulated by MLST8. The kinase activity of MTOR is inhibited by DEPTOR and AKT1S1. The non-canonical mTORC1 complex is independent of the RHEB GTPase and specifically mediates phosphorylation of MiT/TFE factors TFEB and TFE3 but not other mTORC1 substrates: it is activated by FLCN, which activates Rag GTPases RagC/RRAGC and RagD/RRAGD. MTOR is the target of the immunosuppressive and anti-cancer drug rapamycin which acts in complex with FKBP1A/FKBP12, and specifically inhibits its kinase activity. mTORC2 is also activated by growth factors, but seems to be nutrient-insensitive. mTORC2 associates and is directly activated by ribosomes. mTORC2 may also be regulated by RHEB but in an indirect manner through the PI3K signaling pathway. Functionally, serine/threonine protein kinase which is a central regulator of cellular metabolism, growth and survival in response to hormones, growth factors, nutrients, energy and stress signals. MTOR directly or indirectly regulates the phosphorylation of at least 800 proteins. Functions as part of 2 structurally and functionally distinct signaling complexes mTORC1 and mTORC2 (mTOR complex 1 and 2). In response to nutrients, growth factors or amino acids, mTORC1 is recruited to the lysosome membrane and promotes protein, lipid and nucleotide synthesis by phosphorylating key regulators of mRNA translation and ribosome synthesis. This includes phosphorylation of EIF4EBP1 and release of its inhibition toward the elongation initiation factor 4E (eiF4E). Moreover, phosphorylates and activates RPS6KB1 and RPS6KB2 that promote protein synthesis by modulating the activity of their downstream targets including ribosomal protein S6, eukaryotic translation initiation factor EIF4B, and the inhibitor of translation initiation PDCD4. Stimulates the pyrimidine biosynthesis pathway, both by acute regulation through RPS6KB1-mediated phosphorylation of the biosynthetic enzyme CAD, and delayed regulation, through transcriptional enhancement of the pentose phosphate pathway which produces 5-phosphoribosyl-1-pyrophosphate (PRPP), an allosteric activator of CAD at a later step in synthesis, this function is dependent on the mTORC1 complex. Regulates ribosome synthesis by activating RNA polymerase III-dependent transcription through phosphorylation and inhibition of MAF1 an RNA polymerase III-repressor. Activates dormant ribosomes by mediating phosphorylation of SERBP1, leading to SERBP1 inactivation and reactivation of translation. In parallel to protein synthesis, also regulates lipid synthesis through SREBF1/SREBP1 and LPIN1. To maintain energy homeostasis mTORC1 may also regulate mitochondrial biogenesis through regulation of PPARGC1A. In the same time, mTORC1 inhibits catabolic pathways: negatively regulates autophagy through phosphorylation of ULK1. Under nutrient sufficiency, phosphorylates ULK1 at 'Ser-758', disrupting the interaction with AMPK and preventing activation of ULK1. Also prevents autophagy through phosphorylation of the autophagy inhibitor DAP. Also prevents autophagy by phosphorylating RUBCNL/Pacer under nutrient-rich conditions. Prevents autophagy by mediating phosphorylation of AMBRA1, thereby inhibiting AMBRA1 ability to mediate ubiquitination of ULK1 and interaction between AMBRA1 and PPP2CA. mTORC1 exerts a feedback control on upstream growth factor signaling that includes phosphorylation and activation of GRB10 a INSR-dependent signaling suppressor. Among other potential targets mTORC1 may phosphorylate CLIP1 and regulate microtubules. The mTORC1 complex is inhibited in response to starvation and amino acid depletion. The non-canonical mTORC1 complex, which acts independently of RHEB, specifically mediates phosphorylation of MiT/TFE factors TFEB and TFE3 in the presence of nutrients, promoting their cytosolic retention and inactivation. Upon starvation or lysosomal stress, inhibition of mTORC1 induces dephosphorylation and nuclear translocation of TFEB and TFE3, promoting their transcription factor activity. The mTORC1 complex regulates pyroptosis in macrophages by promoting GSDMD oligomerization. MTOR phosphorylates RPTOR which in turn inhibits mTORC1. As part of the mTORC2 complex, MTOR transduces signals from growth factors to pathways involved in proliferation, cytoskeletal organization, lipogenesis and anabolic output. In response to growth factors, mTORC2 phosphorylates and activates AGC protein kinase family members, including AKT (AKT1, AKT2 and AKT3), PKC (PRKCA, PRKCB and PRKCE) and SGK1. In contrast to mTORC1, mTORC2 is nutrient-insensitive. mTORC2 plays a critical role in AKT1 activation by mediating phosphorylation of different sites depending on the context, such as 'Thr-450', 'Ser-473', 'Ser-477' or 'Thr-479', facilitating the phosphorylation of the activation loop of AKT1 on 'Thr-308' by PDPK1/PDK1 which is a prerequisite for full activation. mTORC2 also regulates the phosphorylation of SGK1 at 'Ser-422'. mTORC2 may regulate the actin cytoskeleton, through phosphorylation of PRKCA, PXN and activation of the Rho-type guanine nucleotide exchange factors RHOA and RAC1A or RAC1B. The mTORC2 complex also phosphorylates various proteins involved in insulin signaling, such as FBXW8 and IGF2BP1. May also regulate insulin signaling by acting as a tyrosine protein kinase that catalyzes phosphorylation of IGF1R and INSR. Regulates osteoclastogenesis by adjusting the expression of CEBPB isoforms. Plays an important regulatory role in the circadian clock function; regulates period length and rhythm amplitude of the suprachiasmatic nucleus (SCN) and liver clocks. This Rattus norvegicus (Rat) protein is Serine/threonine-protein kinase mTOR.